The primary structure comprises 128 residues: Ribosome-binding factor A (128 aa).

Belongs to the RbfA family. In terms of assembly, monomer. Binds 30S ribosomal subunits, but not 50S ribosomal subunits or 70S ribosomes.

Its subcellular location is the cytoplasm. Its function is as follows. One of several proteins that assist in the late maturation steps of the functional core of the 30S ribosomal subunit. Associates with free 30S ribosomal subunits (but not with 30S subunits that are part of 70S ribosomes or polysomes). Required for efficient processing of 16S rRNA. May interact with the 5'-terminal helix region of 16S rRNA. The sequence is that of Ribosome-binding factor A from Rippkaea orientalis (strain PCC 8801 / RF-1) (Cyanothece sp. (strain PCC 8801)).